The chain runs to 222 residues: Thiol:disulfide interchange protein DsbL (222 aa).

The first 27 residues, Met1 to Ala27, serve as a signal peptide directing secretion. In terms of domain architecture, Thioredoxin spans Phe28 to Thr221. Residues Cys56 and Cys59 are joined by a disulfide bond.

It belongs to the thioredoxin family. DsbL subfamily. In terms of assembly, interacts with DsbI.

The protein localises to the periplasm. In terms of biological role, involved in disulfide-bond formation. Acts by transferring its disulfide bond to other proteins. Part of a redox system composed of DsbI and DsbL that mediates formation of an essential disulfide bond in AssT. In Lelliottia amnigena (Enterobacter amnigenus), this protein is Thiol:disulfide interchange protein DsbL.